Reading from the N-terminus, the 462-residue chain is Glycine--tRNA ligase (462 aa).

Substrate is bound by residues arginine 100 and glutamate 174. Residues 206–208 (RNE), 216–221 (FRTREF), 290–291 (EL), and 334–337 (GADR) each bind ATP. 221-225 (FEQME) is a substrate binding site. 330 to 334 (EPSLG) contacts substrate.

Belongs to the class-II aminoacyl-tRNA synthetase family. In terms of assembly, homodimer.

The protein resides in the cytoplasm. The enzyme catalyses tRNA(Gly) + glycine + ATP = glycyl-tRNA(Gly) + AMP + diphosphate. Its function is as follows. Catalyzes the attachment of glycine to tRNA(Gly). In Ruminiclostridium cellulolyticum (strain ATCC 35319 / DSM 5812 / JCM 6584 / H10) (Clostridium cellulolyticum), this protein is Glycine--tRNA ligase.